The primary structure comprises 160 residues: Cytochrome b6-f complex subunit 4 (160 aa).

3 helical membrane-spanning segments follow: residues 36–56 (LLYV…GLAI), 95–115 (LLGI…PFIE), and 131–151 (AIFL…TFPI).

It belongs to the cytochrome b family. PetD subfamily. The 4 large subunits of the cytochrome b6-f complex are cytochrome b6, subunit IV (17 kDa polypeptide, PetD), cytochrome f and the Rieske protein, while the 4 small subunits are PetG, PetL, PetM and PetN. The complex functions as a dimer.

Its subcellular location is the cellular thylakoid membrane. Component of the cytochrome b6-f complex, which mediates electron transfer between photosystem II (PSII) and photosystem I (PSI), cyclic electron flow around PSI, and state transitions. The protein is Cytochrome b6-f complex subunit 4 of Microcystis aeruginosa (strain NIES-843 / IAM M-2473).